Reading from the N-terminus, the 149-residue chain is Cytochrome c-555 (149 aa).

A signal peptide spans 1–20 (MKRTMIVVTTLLLGAGAVMA). Residues Met-32, Cys-137, Cys-140, and His-141 each coordinate heme c.

Monomer. Post-translationally, binds 1 heme c group covalently per subunit.

The protein resides in the periplasm. Low-spin monoheme cytochrome. The sequence is that of Cytochrome c-555 (cycC) from Bradyrhizobium diazoefficiens (strain JCM 10833 / BCRC 13528 / IAM 13628 / NBRC 14792 / USDA 110).